We begin with the raw amino-acid sequence, 176 residues long: ATP-dependent protease subunit HslV (176 aa).

The active site involves Thr-2. Na(+) contacts are provided by Gly-157, Cys-160, and Thr-163.

The protein belongs to the peptidase T1B family. HslV subfamily. As to quaternary structure, a double ring-shaped homohexamer of HslV is capped on each side by a ring-shaped HslU homohexamer. The assembly of the HslU/HslV complex is dependent on binding of ATP.

It localises to the cytoplasm. It carries out the reaction ATP-dependent cleavage of peptide bonds with broad specificity.. Allosterically activated by HslU binding. Functionally, protease subunit of a proteasome-like degradation complex believed to be a general protein degrading machinery. The polypeptide is ATP-dependent protease subunit HslV (Marinobacter nauticus (strain ATCC 700491 / DSM 11845 / VT8) (Marinobacter aquaeolei)).